The chain runs to 458 residues: Bifunctional protein GlmU (458 aa).

Residues 1 to 232 form a pyrophosphorylase region; it reads MISPLSVIIL…TFEIEGVNNR (232 aa). Residues 10–13, K24, Q79, 84–85, 106–108, G142, E157, N172, and N230 contribute to the UDP-N-acetyl-alpha-D-glucosamine site; these read LAAG, GT, and YGD. D108 is a binding site for Mg(2+). A Mg(2+)-binding site is contributed by N230. The interval 233 to 253 is linker; that stretch reads QQLASLERTWQGKLVADLQEA. Residues 254–458 are N-acetyltransferase; it reads GVQFADPTRV…KDNFQRPTKK (205 aa). 2 residues coordinate UDP-N-acetyl-alpha-D-glucosamine: R336 and K354. H366 serves as the catalytic Proton acceptor. Residues Y369 and N380 each contribute to the UDP-N-acetyl-alpha-D-glucosamine site. Acetyl-CoA is bound by residues A383, 389–390, S408, A426, and R443; that span reads NY.

It in the N-terminal section; belongs to the N-acetylglucosamine-1-phosphate uridyltransferase family. This sequence in the C-terminal section; belongs to the transferase hexapeptide repeat family. Homotrimer. It depends on Mg(2+) as a cofactor.

It is found in the cytoplasm. It carries out the reaction alpha-D-glucosamine 1-phosphate + acetyl-CoA = N-acetyl-alpha-D-glucosamine 1-phosphate + CoA + H(+). It catalyses the reaction N-acetyl-alpha-D-glucosamine 1-phosphate + UTP + H(+) = UDP-N-acetyl-alpha-D-glucosamine + diphosphate. The protein operates within nucleotide-sugar biosynthesis; UDP-N-acetyl-alpha-D-glucosamine biosynthesis; N-acetyl-alpha-D-glucosamine 1-phosphate from alpha-D-glucosamine 6-phosphate (route II): step 2/2. It functions in the pathway nucleotide-sugar biosynthesis; UDP-N-acetyl-alpha-D-glucosamine biosynthesis; UDP-N-acetyl-alpha-D-glucosamine from N-acetyl-alpha-D-glucosamine 1-phosphate: step 1/1. It participates in bacterial outer membrane biogenesis; LPS lipid A biosynthesis. Catalyzes the last two sequential reactions in the de novo biosynthetic pathway for UDP-N-acetylglucosamine (UDP-GlcNAc). The C-terminal domain catalyzes the transfer of acetyl group from acetyl coenzyme A to glucosamine-1-phosphate (GlcN-1-P) to produce N-acetylglucosamine-1-phosphate (GlcNAc-1-P), which is converted into UDP-GlcNAc by the transfer of uridine 5-monophosphate (from uridine 5-triphosphate), a reaction catalyzed by the N-terminal domain. The chain is Bifunctional protein GlmU from Psychrobacter arcticus (strain DSM 17307 / VKM B-2377 / 273-4).